Reading from the N-terminus, the 131-residue chain is MTKHLLLMLQILYVLRIFRTQMVIQTSPVRSIYQNLRIHHVFQIREILLLHMAHEVLHFYCCLGFSPFFYNSRFLQFKVSIRCPLFHAQNIFNSKLEKYECTFKYYSNPLLVNVIILFGLRISVWKWLYLT.

This is an uncharacterized protein from Caenorhabditis elegans.